Here is a 338-residue protein sequence, read N- to C-terminus: Ketol-acid reductoisomerase (NADP(+)) (338 aa).

A KARI N-terminal Rossmann domain is found at 1 to 181 (MNVFYDKDAD…GGGRAGIIET (181 aa)). NADP(+) contacts are provided by residues 24–27 (YGSQ), Arg-47, and Ser-52. Residue His-107 is part of the active site. Gly-133 contacts NADP(+). The region spanning 182–327 (NFREETETDL…AKLRAMMPWI (146 aa)) is the KARI C-terminal knotted domain. Mg(2+) is bound by residues Asp-190, Glu-194, Glu-226, and Glu-230. Residue Ser-251 participates in substrate binding.

The protein belongs to the ketol-acid reductoisomerase family. Requires Mg(2+) as cofactor.

It catalyses the reaction (2R)-2,3-dihydroxy-3-methylbutanoate + NADP(+) = (2S)-2-acetolactate + NADPH + H(+). The catalysed reaction is (2R,3R)-2,3-dihydroxy-3-methylpentanoate + NADP(+) = (S)-2-ethyl-2-hydroxy-3-oxobutanoate + NADPH + H(+). Its pathway is amino-acid biosynthesis; L-isoleucine biosynthesis; L-isoleucine from 2-oxobutanoate: step 2/4. The protein operates within amino-acid biosynthesis; L-valine biosynthesis; L-valine from pyruvate: step 2/4. Its function is as follows. Involved in the biosynthesis of branched-chain amino acids (BCAA). Catalyzes an alkyl-migration followed by a ketol-acid reduction of (S)-2-acetolactate (S2AL) to yield (R)-2,3-dihydroxy-isovalerate. In the isomerase reaction, S2AL is rearranged via a Mg-dependent methyl migration to produce 3-hydroxy-3-methyl-2-ketobutyrate (HMKB). In the reductase reaction, this 2-ketoacid undergoes a metal-dependent reduction by NADPH to yield (R)-2,3-dihydroxy-isovalerate. In Burkholderia multivorans (strain ATCC 17616 / 249), this protein is Ketol-acid reductoisomerase (NADP(+)).